A 679-amino-acid chain; its full sequence is Glycine--tRNA ligase beta subunit (679 aa).

Belongs to the class-II aminoacyl-tRNA synthetase family. As to quaternary structure, tetramer of two alpha and two beta subunits.

The protein localises to the cytoplasm. It catalyses the reaction tRNA(Gly) + glycine + ATP = glycyl-tRNA(Gly) + AMP + diphosphate. The polypeptide is Glycine--tRNA ligase beta subunit (Streptococcus pyogenes serotype M6 (strain ATCC BAA-946 / MGAS10394)).